The sequence spans 160 residues: UPF0758 protein YfjY (160 aa).

An MPN domain is found at 38-160 (AFTSTQAARD…IYSFAEHGLL (123 aa)). The Zn(2+) site is built by His109, His111, and Asp122. The short motif at 109-122 (HNHPSGDTTPSQAD) is the JAMM motif element.

This sequence belongs to the UPF0758 family.

This chain is UPF0758 protein YfjY (yfjY), found in Escherichia coli (strain K12).